The sequence spans 117 residues: Large ribosomal subunit protein bL20c (117 aa).

This sequence belongs to the bacterial ribosomal protein bL20 family.

It localises to the plastid. The protein localises to the chloroplast. Binds directly to 23S ribosomal RNA and is necessary for the in vitro assembly process of the 50S ribosomal subunit. It is not involved in the protein synthesizing functions of that subunit. This is Large ribosomal subunit protein bL20c from Thalassiosira pseudonana (Marine diatom).